We begin with the raw amino-acid sequence, 96 residues long: Co-chaperonin GroES (96 aa).

The protein belongs to the GroES chaperonin family. In terms of assembly, heptamer of 7 subunits arranged in a ring. Interacts with the chaperonin GroEL.

The protein localises to the cytoplasm. Together with the chaperonin GroEL, plays an essential role in assisting protein folding. The GroEL-GroES system forms a nano-cage that allows encapsulation of the non-native substrate proteins and provides a physical environment optimized to promote and accelerate protein folding. GroES binds to the apical surface of the GroEL ring, thereby capping the opening of the GroEL channel. The polypeptide is Co-chaperonin GroES (Shewanella loihica (strain ATCC BAA-1088 / PV-4)).